We begin with the raw amino-acid sequence, 880 residues long: Leucine--tRNA ligase (880 aa).

Positions 46–56 (PYPSGALHMGH) match the 'HIGH' region motif. The interval 483–502 (SPIKTEPTWRQTTCPDCGGP) is disordered. The short motif at 638-642 (KMSKS) is the 'KMSKS' region element. Residue K641 participates in ATP binding.

Belongs to the class-I aminoacyl-tRNA synthetase family.

It is found in the cytoplasm. The catalysed reaction is tRNA(Leu) + L-leucine + ATP = L-leucyl-tRNA(Leu) + AMP + diphosphate. The sequence is that of Leucine--tRNA ligase from Xanthomonas oryzae pv. oryzae (strain PXO99A).